The sequence spans 1649 residues: Cortactin-binding protein 2 (1649 aa).

Residues 1 to 27 (MATDSASCEPDLSRAPGDAEGATAEAA) form a disordered region. A compositionally biased stretch (low complexity) spans 15-25 (APGDAEGATAE). The stretch at 118-275 (RKMQERMSAQ…EQMKKGNDGK (158 aa)) forms a coiled coil. 3 disordered regions span residues 322–439 (PLSV…PGLN), 451–476 (GNAN…PTSR), and 492–604 (ALSR…LPPK). A compositionally biased stretch (polar residues) spans 330 to 342 (STGSPLVSTNTKG). Residues 395 to 416 (STPSTPSGTAPAAAQTLGAAPQ) show a composition bias toward low complexity. The span at 492–503 (ALSRFTSPQAGA) shows a compositional bias: polar residues. Residue R495 is modified to Asymmetric dimethylarginine. ANK repeat units lie at residues 699–729 (GRPT…DINY), 733–762 (DSHS…RVDA), 766–795 (NGFT…NINH), 799–828 (GGQT…DRSI), 832–861 (DGWT…PAPG), and 901–931 (EGWT…EPER). A disordered region spans residues 1438–1471 (SAAWRKVNTSPRKKPGHFSSPMWNKPDLKHEGMR). S1510 bears the Phosphoserine mark. Positions 1527-1649 (KSESDISKIA…KHEHVEKRNK (123 aa)) are disordered. Residues 1528 to 1546 (SESDISKIADSREDLRTFD) are compositionally biased toward basic and acidic residues. Polar residues-rich tracts occupy residues 1547–1557 (SSRTNPVTSAP), 1571–1584 (PLSS…SNSK), and 1621–1630 (NTRQLEINNN). Residues 1631 to 1649 (SKEENWNVDKHEHVEKRNK) show a composition bias toward basic and acidic residues.

As to quaternary structure, interacts with CTTN/cortactin SH3 domain. Interacts with STRN, STRN4/zinedin and MOB4/phocein; this interactions mediate the association with the STRIPAK core complex and may regulate dendritic spine distribution of the STRIPAK complex in hippocampal neurons. Activation of glutamate receptors weakens the interaction with STRN and STRN4.

It is found in the cytoplasm. The protein resides in the cell cortex. It localises to the cell projection. Its subcellular location is the dendritic spine. Its function is as follows. Regulates the dendritic spine distribution of CTTN/cortactin in hippocampal neurons, and thus controls dendritic spinogenesis and dendritic spine maintenance. Associates with the striatin-interacting phosphatase and kinase (STRIPAK) core complex to regulate dendritic spine distribution of the STRIPAK complex in hippocampal neurons. In Rattus norvegicus (Rat), this protein is Cortactin-binding protein 2 (Cttnbp2).